Consider the following 213-residue polypeptide: Probable GH family 25 lysozyme 4 (213 aa).

The first 19 residues, 1–19 (MRLFLLLITFIALFGAINA), serve as a signal peptide directing secretion. The Ch-type lysozyme domain occupies 21 to 213 (SGVDISQGSS…VGYDFNWYPN (193 aa)). Residues D24, D112, and E114 contribute to the active site.

It belongs to the glycosyl hydrolase 25 family.

It is found in the secreted. The catalysed reaction is Hydrolysis of (1-&gt;4)-beta-linkages between N-acetylmuramic acid and N-acetyl-D-glucosamine residues in a peptidoglycan and between N-acetyl-D-glucosamine residues in chitodextrins.. The protein is Probable GH family 25 lysozyme 4 of Dictyostelium discoideum (Social amoeba).